A 186-amino-acid polypeptide reads, in one-letter code: Lipid A palmitoyltransferase PagP (186 aa).

The first 25 residues, 1–25 (MNVSKYVAIFSFVFIQLISVGKVFA), serve as a signal peptide directing secretion. Catalysis depends on residues histidine 58, aspartate 101, and serine 102.

The protein belongs to the lipid A palmitoyltransferase family. In terms of assembly, homodimer.

It is found in the cell outer membrane. The enzyme catalyses lipid A (E. coli) + a 1-hexadecanoyl-2-acyl-sn-glycero-3-phosphocholine = hepta-acyl lipid A (E. coli) + a 2-acyl-sn-glycero-3-phosphocholine. The catalysed reaction is lipid IIA + a 1-hexadecanoyl-2-acyl-sn-glycero-3-phosphocholine = lipid IIB + a 2-acyl-sn-glycero-3-phosphocholine. It catalyses the reaction lipid IVA (E. coli) + a 1-hexadecanoyl-2-acyl-sn-glycero-3-phosphocholine = lipid IVB (E. coli) + a 2-acyl-sn-glycero-3-phosphocholine. Transfers a palmitate residue from the sn-1 position of a phospholipid to the N-linked hydroxymyristate on the proximal unit of lipid A or its precursors. The polypeptide is Lipid A palmitoyltransferase PagP (Escherichia coli O157:H7).